Consider the following 65-residue polypeptide: MTTNLDSTQLEKLTDTDINDTVLKLKKELFELRLQKATRQEIKPHLFKQKKKLIAKLLTIKSKKS.

The protein belongs to the universal ribosomal protein uL29 family.

It is found in the plastid. The protein localises to the chloroplast. The polypeptide is Large ribosomal subunit protein uL29c (rpl29) (Guillardia theta (Cryptophyte)).